Here is a 330-residue protein sequence, read N- to C-terminus: Transcriptional regulatory protein PHO23 (330 aa).

The interval 139-272 is disordered; the sequence is EKIESKSNSK…NSNNSRISRP (134 aa). Over residues 231–254 the composition is skewed to polar residues; it reads TAVSPSTISTATAVNNGRIGTSTA. The span at 255-269 shows a compositional bias: low complexity; it reads SRGVSSVGNSNNSRI. Residues 280–329 form a PHD-type zinc finger; that stretch reads PLYCYCNQVAYGEMVGCDGADCELEWFHLPCIGLETLPKGKWYCDDCKKK. C283, C285, C296, C301, H307, C310, C323, and C326 together coordinate Zn(2+).

Belongs to the ING family. In terms of assembly, interacts with H3K4me3 and to a lesser extent with H3K4me2. Component of the RPD3C(L) complex composed of at least ASH1, CTI6, DEP1, PHO23, RPD3, RXT2, RXT3, SAP30, SDS3, SIN3, UME1 and UME6.

It is found in the nucleus. Its function is as follows. Component of the RPD3C(L) histone deacetylase complex (HDAC) responsible for the deacetylation of lysine residues on the N-terminal part of the core histones (H2A, H2B, H3 and H4). Histone deacetylation gives a tag for epigenetic repression and plays an important role in transcriptional regulation, cell cycle progression and developmental events. In Saccharomyces cerevisiae (strain ATCC 204508 / S288c) (Baker's yeast), this protein is Transcriptional regulatory protein PHO23 (PHO23).